Here is a 326-residue protein sequence, read N- to C-terminus: Beta-ketoacyl-[acyl-carrier-protein] synthase III (326 aa).

Catalysis depends on residues Cys112 and His251. The ACP-binding stretch occupies residues 252–256 (QANSR). The active site involves Asn281.

Belongs to the thiolase-like superfamily. FabH family. As to quaternary structure, homodimer.

It is found in the cytoplasm. The enzyme catalyses malonyl-[ACP] + acetyl-CoA + H(+) = 3-oxobutanoyl-[ACP] + CO2 + CoA. It participates in lipid metabolism; fatty acid biosynthesis. Functionally, catalyzes the condensation reaction of fatty acid synthesis by the addition to an acyl acceptor of two carbons from malonyl-ACP. Catalyzes the first condensation reaction which initiates fatty acid synthesis and may therefore play a role in governing the total rate of fatty acid production. Possesses both acetoacetyl-ACP synthase and acetyl transacylase activities. Its substrate specificity determines the biosynthesis of branched-chain and/or straight-chain of fatty acids. This chain is Beta-ketoacyl-[acyl-carrier-protein] synthase III, found in Clostridium botulinum (strain 657 / Type Ba4).